A 21-amino-acid polypeptide reads, in one-letter code: Paulistine (21 aa).

An intrachain disulfide couples C7 to C14. A Threonine amide modification is found at T21.

It belongs to the sylv/frat/paul family. Post-translationally, occurs in oxidized and reduced states which are thought to adopt a compact globular and linear structure, respectively.

Induces transient hyperalgesia and paw edema in mice. Probably exerts its effects via different pathways in an oxidation state-dependent way. This chain is Paulistine, found in Polybia paulista (Neotropical social wasp).